The primary structure comprises 290 residues: UPF0761 membrane protein Ent638_4092 (290 aa).

Transmembrane regions (helical) follow at residues 44-64 (LLSL…FPMF), 104-124 (VGAC…DSAL), 140-160 (FAVY…SLAI), 183-203 (IFPL…VPTL), 210-230 (AIVG…GFAL), and 244-264 (VLAV…IVLL).

The protein belongs to the UPF0761 family.

It is found in the cell inner membrane. This is UPF0761 membrane protein Ent638_4092 from Enterobacter sp. (strain 638).